Consider the following 1313-residue polypeptide: Ataxin-2 (1313 aa).

Residues 1–12 (MRSAAAAPRSPA) show a composition bias toward low complexity. Residues 1–255 (MRSAAAAPRS…RNSNKGLPQS (255 aa)) form a disordered region. Pro residues predominate over residues 48-65 (GPYPSAAPPPPGPGPPPS). 4 stretches are compositionally biased toward low complexity: residues 104-114 (FVVLLLPLASP), 141-154 (ARPAPGCPRPACEP), 166-187 (QQQQQQQQQQQQQQQQQQQQQQ), and 204-234 (LLASPAAAPSPSSSSVSSSSATAPSSVVAAT). Residues 235-244 (SGGGRPGLGR) are compositionally biased toward gly residues. Ser-248 carries the phosphoserine modification. The 78-residue stretch at 267 to 344 (RMVHILTSVV…FVVVQFKDMD (78 aa)) folds into the Sm domain. Phosphoserine is present on residues Ser-393, Ser-466, Ser-478, Ser-508, and Ser-554. Basic and acidic residues-rich tracts occupy residues 459 to 471 (ALENDDRSEEEKY) and 478 to 492 (SSEREGHSINTRENK). 2 disordered regions span residues 459-954 (ALEN…HQQP) and 1137-1219 (NATL…NSFP). Polar residues predominate over residues 508 to 544 (SGRQNSPRMGQPGSGSMPSRSTSHTSDFNPNSGSDQR). Positions 552–562 (WPSPCPSPSSR) are enriched in pro residues. The segment covering 563–581 (PPSRYQSGPNSLPPRAATP) has biased composition (low complexity). Residues 582 to 598 (TRPPSRPPSRPSRPPSH) are compositionally biased toward pro residues. A Phosphoserine modification is found at Ser-624. Basic residues predominate over residues 627–637 (AQRHPRNHRVS). Arg-640 is modified (asymmetric dimethylarginine; alternate). Arg-640 carries the omega-N-methylarginine; alternate modification. Ser-642 bears the Phosphoserine mark. Residues 666–681 (TSPSGGTWSSVVSGVP) show a composition bias toward low complexity. Phosphoserine is present on Ser-684. Residues 693–703 (PRQNSIGNTPS) show a composition bias toward polar residues. A Phosphoserine modification is found at Ser-728. A Phosphothreonine modification is found at Thr-741. Residues 768 to 777 (PNETSPSFSK) show a composition bias toward polar residues. A phosphoserine mark is found at Ser-772 and Ser-784. Positions 788-804 (SEHRKQIDDLKKFKNDF) are enriched in basic and acidic residues. Residues 807 to 820 (QPSSTSESMDQLLN) are compositionally biased toward polar residues. Basic and acidic residues predominate over residues 821–844 (KNREGEKSRDLIKDKIEPSAKDSF). Residues 847–871 (NSSSNCTSGSSKPNSPSISPSILSN) are compositionally biased toward low complexity. A phosphoserine mark is found at Ser-856, Ser-857, Ser-861, Ser-865, Ser-867, Ser-888, and Ser-889. Residues 880-891 (VTSQGVQTSSPA) are compositionally biased toward polar residues. Lys-893 is covalently cross-linked (Glycyl lysine isopeptide (Lys-Gly) (interchain with G-Cter in SUMO2)). The segment covering 893 to 910 (KQEKDDKEEKKDAAEQVR) has biased composition (basic and acidic residues). Composition is skewed to low complexity over residues 925–936 (SFSQPKPSTTPT) and 1155–1192 (GQQQSQHGGSHPAPSPVQHHQHQAAQALHLASPQQQSA). Residues 1206 to 1219 (TPASNTQSPQNSFP) show a composition bias toward polar residues.

This sequence belongs to the ataxin-2 family. In terms of assembly, monomer. Can also form homodimers. Interacts with TARDBP; the interaction is RNA-dependent. Interacts with RBFOX1. Interacts with polyribosomes. Interacts with SH3GL2 and SH3GL3. Interacts with SH3KBP1 and CBL. Interacts with EGFR. Interacts with ATXN2L. Expressed in the brain, heart, liver, skeletal muscle, pancreas and placenta. Isoform 1 is predominant in the brain and spinal cord. Isoform 4 is more abundant in the cerebellum. In the brain, broadly expressed in the amygdala, caudate nucleus, corpus callosum, hippocampus, hypothalamus, substantia nigra, subthalamic nucleus and thalamus.

The protein localises to the cytoplasm. Functionally, involved in EGFR trafficking, acting as negative regulator of endocytic EGFR internalization at the plasma membrane. The protein is Ataxin-2 (ATXN2) of Homo sapiens (Human).